The chain runs to 24 residues: Outer membrane protein (24 aa).

The protein belongs to the Gram-negative porin family. As to quaternary structure, homotrimer.

The protein resides in the cell outer membrane. In terms of biological role, forms pores that allow passive diffusion of small molecules across the outer membrane. The sequence is that of Outer membrane protein from Sodalis glossinidius.